We begin with the raw amino-acid sequence, 311 residues long: Quinolinate synthase (311 aa).

Positions 25 and 42 each coordinate iminosuccinate. Cysteine 87 contributes to the [4Fe-4S] cluster binding site. Residues 113–115 and serine 130 each bind iminosuccinate; that span reads YIN. Cysteine 175 is a [4Fe-4S] cluster binding site. Residues 201–203 and threonine 218 contribute to the iminosuccinate site; that span reads HPE. A [4Fe-4S] cluster-binding site is contributed by cysteine 268.

Belongs to the quinolinate synthase family. Type 2 subfamily. Requires [4Fe-4S] cluster as cofactor.

It localises to the cytoplasm. It catalyses the reaction iminosuccinate + dihydroxyacetone phosphate = quinolinate + phosphate + 2 H2O + H(+). The protein operates within cofactor biosynthesis; NAD(+) biosynthesis; quinolinate from iminoaspartate: step 1/1. Catalyzes the condensation of iminoaspartate with dihydroxyacetone phosphate to form quinolinate. The polypeptide is Quinolinate synthase (Saccharolobus solfataricus (strain ATCC 35092 / DSM 1617 / JCM 11322 / P2) (Sulfolobus solfataricus)).